Reading from the N-terminus, the 503-residue chain is NAD(P)H-quinone oxidoreductase chain 4, chloroplastic (503 aa).

Transmembrane regions (helical) follow at residues 3-23, 37-57, 84-104, 113-130, 134-154, 167-187, 208-228, 242-262, 274-294, 305-325, 330-350, 385-405, 416-436, and 462-482; these read FFPW…IVFF, LCIC…HFQV, GLSV…TLAA, LFHF…GLFA, LFLF…LLSM, FILY…GLTL, ALEI…SPIL, HYST…YGLI, SLFS…AALT, IAYS…SMTD, GALL…FLAG, SLAL…FGII, ILIS…SLSM, and LFLS…PDFV.

Belongs to the complex I subunit 4 family.

The protein localises to the plastid. Its subcellular location is the chloroplast thylakoid membrane. It catalyses the reaction a plastoquinone + NADH + (n+1) H(+)(in) = a plastoquinol + NAD(+) + n H(+)(out). The catalysed reaction is a plastoquinone + NADPH + (n+1) H(+)(in) = a plastoquinol + NADP(+) + n H(+)(out). The sequence is that of NAD(P)H-quinone oxidoreductase chain 4, chloroplastic from Ipomoea purpurea (Common morning glory).